The chain runs to 139 residues: Actin-depolymerizing factor 3 (139 aa).

One can recognise an ADF-H domain in the interval 5-139; the sequence is ASGMAVHDDC…DLDVFKSRAN (135 aa). Ser6 is modified (phosphoserine).

Belongs to the actin-binding proteins ADF family.

The protein localises to the cytoplasm. The protein resides in the cytoskeleton. Functionally, actin-depolymerizing protein. Severs actin filaments (F-actin) and binds to actin monomers. The polypeptide is Actin-depolymerizing factor 3 (ADF3) (Arabidopsis thaliana (Mouse-ear cress)).